A 1031-amino-acid polypeptide reads, in one-letter code: Semaphorin-6A (1031 aa).

Residues 1-18 (MRPAALLLCLTLLHCAGA) form the signal peptide. The Extracellular segment spans residues 19-649 (GFPEDSEPIS…KSNDQLVPVT (631 aa)). Residues 24 to 512 (SEPISISHGN…FSTCVIKVPL (489 aa)) form the Sema domain. N-linked (GlcNAc...) asparagine glycosylation is found at asparagine 33, asparagine 49, and asparagine 65. Intrachain disulfides connect cysteine 107–cysteine 117, cysteine 135–cysteine 144, cysteine 258–cysteine 369, and cysteine 283–cysteine 328. N-linked (GlcNAc...) asparagine glycosylation occurs at asparagine 282. N-linked (GlcNAc...) asparagine glycans are attached at residues asparagine 434 and asparagine 461. 4 disulfides stabilise this stretch: cysteine 477-cysteine 506, cysteine 515-cysteine 533, cysteine 521-cysteine 568, and cysteine 525-cysteine 542. Residues 650–670 (LLAIAVILAFVMGAVFSGIIV) traverse the membrane as a helical segment. At 671–1031 (YCVCDHRRKD…TSMKPNDACT (361 aa)) the chain is on the cytoplasmic side. Serine 698 bears the Phosphoserine mark. Disordered regions lie at residues 754 to 777 (ALPT…SREW), 861 to 902 (SSKS…TGLS), and 914 to 1031 (GLEY…DACT). Positions 921–931 (YPTNSLTRSHQ) are enriched in polar residues. The span at 932-951 (TTTLKRNNTNSSNSSHLSRN) shows a compositional bias: low complexity. Serine 953 is subject to Phosphoserine. Composition is skewed to polar residues over residues 971–998 (QVHS…SLTR) and 1019–1031 (PLST…DACT).

This sequence belongs to the semaphorin family. In terms of assembly, active as a homodimer or oligomer. The SEMA6A homodimer interacts with a PLXNA2 homodimer, giving rise to a heterotetramer. Interacts with EVL. As to expression, particularly high levels in spinal cord, cerebellum, metencephalon, superior and inferior colliculus, diencephalon, olfactory bulb and eye.

The protein localises to the cell membrane. Functionally, cell surface receptor for PLXNA2 that plays an important role in cell-cell signaling. Required for normal granule cell migration in the developing cerebellum. Promotes reorganization of the actin cytoskeleton and plays an important role in axon guidance in the developing central nervous system. Can act as repulsive axon guidance cue. Has repulsive action towards migrating granular neurons. May play a role in channeling sympathetic axons into the sympathetic chains and controlling the temporal sequence of sympathetic target innervation. This chain is Semaphorin-6A (Sema6a), found in Mus musculus (Mouse).